Here is a 275-residue protein sequence, read N- to C-terminus: Formamidopyrimidine-DNA glycosylase (275 aa).

The active-site Schiff-base intermediate with DNA is the P2. E3 acts as the Proton donor in catalysis. Catalysis depends on K58, which acts as the Proton donor; for beta-elimination activity. DNA is bound by residues H89, R108, and K151. The FPG-type; degenerate zinc-finger motif lies at 236-275; that stretch reads KVYDRAGQPCERCPGPAACAGISRTVQSGRATYFCARTQK. R265 (proton donor; for delta-elimination activity) is an active-site residue.

Belongs to the FPG family. In terms of assembly, monomer. Requires Zn(2+) as cofactor.

It catalyses the reaction Hydrolysis of DNA containing ring-opened 7-methylguanine residues, releasing 2,6-diamino-4-hydroxy-5-(N-methyl)formamidopyrimidine.. The enzyme catalyses 2'-deoxyribonucleotide-(2'-deoxyribose 5'-phosphate)-2'-deoxyribonucleotide-DNA = a 3'-end 2'-deoxyribonucleotide-(2,3-dehydro-2,3-deoxyribose 5'-phosphate)-DNA + a 5'-end 5'-phospho-2'-deoxyribonucleoside-DNA + H(+). Its function is as follows. Involved in base excision repair of DNA damaged by oxidation or by mutagenic agents. Acts as a DNA glycosylase that recognizes and removes damaged bases. Has a preference for oxidized purines, such as 7,8-dihydro-8-oxoguanine (8-oxoG). Has AP (apurinic/apyrimidinic) lyase activity and introduces nicks in the DNA strand. Cleaves the DNA backbone by beta-delta elimination to generate a single-strand break at the site of the removed base with both 3'- and 5'-phosphates. This Acidiphilium cryptum (strain JF-5) protein is Formamidopyrimidine-DNA glycosylase.